The chain runs to 464 residues: Probable 3-ketoacyl-CoA synthase 21 (464 aa).

The chain crosses the membrane as a helical span at residues 21 to 41 (LLSSGVSVFEIFAGLLVVHLI). An FAE domain is found at 42-333 (YQRIRTRVKV…VIQHILCKKL (292 aa)). Residues cysteine 187, histidine 352, histidine 356, histidine 385, and asparagine 389 contribute to the active site.

This sequence belongs to the thiolase-like superfamily. Chalcone/stilbene synthases family. As to expression, expressed in flowers.

It localises to the membrane. It carries out the reaction a very-long-chain acyl-CoA + malonyl-CoA + H(+) = a very-long-chain 3-oxoacyl-CoA + CO2 + CoA. It functions in the pathway lipid metabolism; fatty acid biosynthesis. In Arabidopsis thaliana (Mouse-ear cress), this protein is Probable 3-ketoacyl-CoA synthase 21.